Reading from the N-terminus, the 320-residue chain is Probable cell division protein WhiA (320 aa).

The segment at residues 276-310 (TLKELGELVSGGKISKSGINHRLRKIDEIAERLRA) is a DNA-binding region (H-T-H motif).

Belongs to the WhiA family.

Its function is as follows. Involved in cell division and chromosome segregation. This chain is Probable cell division protein WhiA, found in Geobacillus sp. (strain WCH70).